Consider the following 420-residue polypeptide: MSAPSNKMSATDQMRAMLDQLMGTTRNGDERQLKFSDPRVCKSFLLDCCPHDILASTRMDLGECPKVHDLAFRADYESAAKTRDYYYDIEAMEHLQAFIADCDRRTDSAKQRLKETQEELTAEVAEKANAVHGLAEEIGKKLAKAEALGEAGEVEDSMELMKEIEELRAKKIKAEHEYRTSMPASTYQQQKLRVCEVCSAYLGIHDNDIRLADHFGGKLHLGFLTIREKLIELEKTAAPRKAELKRTGKMTDREDEGRGRNRYFVGGRELDRRSRVHRSRSRERQRNRDGDRERPNNGRGPEEKGSERPKEAADGPERAERAPDRGGRRDDRDNHGRDHRERERDGRRDRDRHGRNDRGRFGDRGGGGGGGGHHRDDRRRSRSRERSPRERRNFNHFRDGGGGGNGQRKRSYSRERNYRR.

A coiled-coil region spans residues 99-130 (IADCDRRTDSAKQRLKETQEELTAEVAEKANA). Basic and acidic residues-rich tracts occupy residues 242–259 (AELK…EGRG), 282–363 (RERQ…RFGD), and 373–399 (HHRD…HFRD). Positions 242 to 420 (AELKRTGKMT…SYSRERNYRR (179 aa)) are disordered.

This sequence belongs to the Luc7 family. As to quaternary structure, interacts with x16 (via Arg/Ser-rich region).

May bind to RNA via its Arg/Ser-rich domain. In Drosophila melanogaster (Fruit fly), this protein is Putative RNA-binding protein Alsin2.